We begin with the raw amino-acid sequence, 698 residues long: PWWP domain-containing DNA repair factor 3A (698 aa).

2 disordered regions span residues 102 to 145 (TSLS…EDDQ) and 159 to 386 (CSPK…EEPP). At S105 the chain carries Phosphoserine. The span at 129–139 (SQVSSAPSPSF) shows a compositional bias: polar residues. A phosphoserine mark is found at S165, S168, and S170. Polar residues predominate over residues 200–211 (DESQNGSGSQLD). Basic and acidic residues-rich tracts occupy residues 212–235 (HGQE…RGKA) and 341–350 (RAGDSDRPEE). S355 and S356 each carry phosphoserine. Over residues 370–384 (EEEEEEEEEEEEEEE) the composition is skewed to acidic residues. A PWWP domain is found at 399–460 (VGMLVWLKYQ…KHFDCKEKHA (62 aa)).

The protein belongs to the PWWP3A family. In terms of assembly, interacts with TP53BP1 (via BRCT domain); the interaction is not dependent on its phosphorylation status. Binds nucleosomes. Interacts with trimethylated 'Lys-36' of histone H3 (H3K36me3) (in vitro).

It is found in the nucleus. Functionally, involved in the DNA damage response pathway by contributing to the maintenance of chromatin architecture. Recruited to the vicinity of DNA breaks by TP53BP1 and plays an accessory role to facilitate damage-induced chromatin changes and promoting chromatin relaxation. Required for efficient DNA repair and cell survival following DNA damage. The protein is PWWP domain-containing DNA repair factor 3A of Rattus norvegicus (Rat).